The chain runs to 388 residues: Lipid-A-disaccharide synthase (388 aa).

This sequence belongs to the LpxB family.

It catalyses the reaction a lipid X + a UDP-2-N,3-O-bis[(3R)-3-hydroxyacyl]-alpha-D-glucosamine = a lipid A disaccharide + UDP + H(+). The protein operates within bacterial outer membrane biogenesis; LPS lipid A biosynthesis. In terms of biological role, condensation of UDP-2,3-diacylglucosamine and 2,3-diacylglucosamine-1-phosphate to form lipid A disaccharide, a precursor of lipid A, a phosphorylated glycolipid that anchors the lipopolysaccharide to the outer membrane of the cell. The protein is Lipid-A-disaccharide synthase of Burkholderia mallei (strain NCTC 10247).